Here is a 131-residue protein sequence, read N- to C-terminus: Lymphocyte antigen 6E (131 aa).

A signal peptide spans 1–20; it reads MKIFLPVLLAALLGVERASS. In terms of domain architecture, UPAR/Ly6 spans 21–101; it reads LMCFSCLNQK…CCQSFLCNFS (81 aa). Cystine bridges form between Cys-23/Cys-48, Cys-26/Cys-35, Cys-41/Cys-71, Cys-75/Cys-92, and Cys-93/Cys-98. N-linked (GlcNAc...) asparagine glycosylation is present at Asn-99. Ser-101 carries the GPI-anchor amidated serine lipid modification. Residues 102–131 constitute a propeptide, removed in mature form; the sequence is AADGGLRASVTLLGAGLLLSLLPALLRFGP.

As to quaternary structure, interacts with CHRNA4. In terms of tissue distribution, widely expressed, predominantly in liver, kidney, ovary, spleen and peripheral blood Leukocytes.

It is found in the cell membrane. Functionally, GPI-anchored cell surface protein that regulates T-lymphocytes proliferation, differentiation, and activation. Regulates the T-cell receptor (TCR) signaling by interacting with component CD3Z/CD247 at the plasma membrane, leading to CD3Z/CD247 phosphorylation modulation. Restricts the entry of human coronaviruses, including SARS-CoV, MERS-CoV and SARS-CoV-2, by interfering with spike protein-mediated membrane fusion. Also plays an essential role in placenta formation by acting as the main receptor for syncytin-A (SynA). Therefore, participates in the normal fusion of syncytiotrophoblast layer I (SynT-I) and in the proper morphogenesis of both fetal and maternal vasculatures within the placenta. May also act as a modulator of nicotinic acetylcholine receptors (nAChRs) activity. In terms of biological role, (Microbial infection) Promotes entry, likely through an enhanced virus-cell fusion process, of various viruses including HIV-1, West Nile virus, dengue virus and Zika virus. In contrast, the paramyxovirus PIV5, which enters at the plasma membrane, does not require LY6E. Mechanistically, adopts a microtubule-like organization upon viral infection and enhances viral uncoating after endosomal escape. The sequence is that of Lymphocyte antigen 6E from Homo sapiens (Human).